Consider the following 439-residue polypeptide: Chitinase-like protein Idgf1 (439 aa).

The first 20 residues, 1–20 (MRFQLCYLLGLLSVTSLSHA), serve as a signal peptide directing secretion. In terms of domain architecture, GH18 spans 22–439 (SNLICYYDST…IVRSIKYFMG (418 aa)). Cysteines 26 and 53 form a disulfide. N122, N218, and N346 each carry an N-linked (GlcNAc...) asparagine glycan. C340 and C423 are disulfide-bonded.

This sequence belongs to the glycosyl hydrolase 18 family. IDGF subfamily. Glycosylated.

The protein localises to the secreted. In terms of biological role, cooperates with insulin-like peptides to stimulate the proliferation, polarization and motility of imaginal disk cells. May act by stabilizing the binding of insulin-like peptides to its receptor through a simultaneous interaction with both molecules to form a multiprotein signaling complex. The sequence is that of Chitinase-like protein Idgf1 (Idgf1) from Drosophila yakuba (Fruit fly).